We begin with the raw amino-acid sequence, 237 residues long: DNA repair protein RecO (237 aa).

Belongs to the RecO family.

Involved in DNA repair and RecF pathway recombination. This Flavobacterium johnsoniae (strain ATCC 17061 / DSM 2064 / JCM 8514 / BCRC 14874 / CCUG 350202 / NBRC 14942 / NCIMB 11054 / UW101) (Cytophaga johnsonae) protein is DNA repair protein RecO.